Here is a 131-residue protein sequence, read N- to C-terminus: Histone H2A.2 (131 aa).

The tract at residues 1–22 (MSGGKGKAGSSEKASTSRSAKA) is disordered. Position 2 is an N-acetylserine (Ser2). Lys5 and Lys7 each carry N6-acetyllysine. N5-methylglutamine is present on Gln105. Residue Lys126 forms a Glycyl lysine isopeptide (Lys-Gly) (interchain with G-Cter in SUMO) linkage. Ser128 carries the phosphoserine modification. The short motif at 128–129 (SQ) is the [ST]-Q motif element.

It belongs to the histone H2A family. In terms of assembly, the nucleosome is a histone octamer containing two molecules each of H2A, H2B, H3 and H4 assembled in one H3-H4 heterotetramer and two H2A-H2B heterodimers. The octamer wraps approximately 147 bp of DNA. Post-translationally, phosphorylated to form H2AS128ph (gamma-H2A) in response to DNA double-strand breaks (DSBs) generated by exogenous genotoxic agents and by stalled replication forks. Phosphorylation is dependent on the DNA damage checkpoint kinases MEC1/ATR and TEL1/ATM, spreads on either side of a detected DSB site and may mark the surrounding chromatin for recruitment of proteins required for DNA damage signaling and repair. Gamma-H2A is removed from the DNA prior to the strand invasion-primer extension step of the repair process and subsequently dephosphorylated. Dephosphorylation is necessary for efficient recovery from the DNA damage checkpoint. Acetylated by ESA1 to form H2AK4ac and H2AK7ac.

Its subcellular location is the nucleus. It localises to the chromosome. Its function is as follows. Core component of nucleosome which plays a central role in DNA double strand break (DSB) repair. Nucleosomes wrap and compact DNA into chromatin, limiting DNA accessibility to the cellular machineries which require DNA as a template. Histones thereby play a central role in transcription regulation, DNA repair, DNA replication and chromosomal stability. DNA accessibility is regulated via a complex set of post-translational modifications of histones, also called histone code, and nucleosome remodeling. The polypeptide is Histone H2A.2 (HTA2) (Scheffersomyces stipitis (strain ATCC 58785 / CBS 6054 / NBRC 10063 / NRRL Y-11545) (Yeast)).